The sequence spans 483 residues: Protein nucleotidyltransferase YdiU (483 aa).

Positions 100, 102, 103, 123, 135, 136, 189, and 196 each coordinate ATP. Aspartate 265 acts as the Proton acceptor in catalysis. Residues asparagine 266 and aspartate 275 each coordinate Mg(2+). ATP is bound at residue aspartate 275.

The protein belongs to the SELO family. Requires Mg(2+) as cofactor. Mn(2+) serves as cofactor.

The catalysed reaction is L-seryl-[protein] + ATP = 3-O-(5'-adenylyl)-L-seryl-[protein] + diphosphate. It catalyses the reaction L-threonyl-[protein] + ATP = 3-O-(5'-adenylyl)-L-threonyl-[protein] + diphosphate. It carries out the reaction L-tyrosyl-[protein] + ATP = O-(5'-adenylyl)-L-tyrosyl-[protein] + diphosphate. The enzyme catalyses L-histidyl-[protein] + UTP = N(tele)-(5'-uridylyl)-L-histidyl-[protein] + diphosphate. The catalysed reaction is L-seryl-[protein] + UTP = O-(5'-uridylyl)-L-seryl-[protein] + diphosphate. It catalyses the reaction L-tyrosyl-[protein] + UTP = O-(5'-uridylyl)-L-tyrosyl-[protein] + diphosphate. In terms of biological role, nucleotidyltransferase involved in the post-translational modification of proteins. It can catalyze the addition of adenosine monophosphate (AMP) or uridine monophosphate (UMP) to a protein, resulting in modifications known as AMPylation and UMPylation. This is Protein nucleotidyltransferase YdiU from Gloeobacter violaceus (strain ATCC 29082 / PCC 7421).